Here is a 152-residue protein sequence, read N- to C-terminus: Deoxyuridine 5'-triphosphate nucleotidohydrolase (152 aa).

Residues 62 to 64, N75, and 79 to 81 contribute to the substrate site; these read RSG and TVD.

This sequence belongs to the dUTPase family. The cofactor is Mg(2+).

It catalyses the reaction dUTP + H2O = dUMP + diphosphate + H(+). Its pathway is pyrimidine metabolism; dUMP biosynthesis; dUMP from dCTP (dUTP route): step 2/2. Its function is as follows. This enzyme is involved in nucleotide metabolism: it produces dUMP, the immediate precursor of thymidine nucleotides and it decreases the intracellular concentration of dUTP so that uracil cannot be incorporated into DNA. The polypeptide is Deoxyuridine 5'-triphosphate nucleotidohydrolase (Leifsonia xyli subsp. xyli (strain CTCB07)).